Here is a 325-residue protein sequence, read N- to C-terminus: Glutarate 2-hydroxylase (325 aa).

3 residues coordinate Fe cation: H160, D162, and H292.

Belongs to the glutarate hydroxylase family. As to quaternary structure, homotetramer. Fe(2+) serves as cofactor.

The catalysed reaction is glutarate + 2-oxoglutarate + O2 = (S)-2-hydroxyglutarate + succinate + CO2. It functions in the pathway amino-acid degradation. Functionally, acts as an alpha-ketoglutarate-dependent dioxygenase catalyzing hydroxylation of glutarate (GA) to L-2-hydroxyglutarate (L2HG). Functions in a L-lysine degradation pathway that proceeds via cadaverine, glutarate and L-2-hydroxyglutarate. In Escherichia coli O17:K52:H18 (strain UMN026 / ExPEC), this protein is Glutarate 2-hydroxylase.